A 321-amino-acid chain; its full sequence is Ubiquitin carboxyl-terminal hydrolase ubh-4 (321 aa).

In terms of domain architecture, UCH catalytic spans 6–220 (SWCLIESDPG…ITFNLMALVP (215 aa)). The active-site Nucleophile is the cysteine 83. Histidine 158 acts as the Proton donor in catalysis. The 29-residue stretch at 273–301 (NYTPFVIELMKILAKEGKLVGLVDNAYQA) folds into the ULD domain.

This sequence belongs to the peptidase C12 family. Interacts with proteasome 19S subunit rpn-13. In terms of tissue distribution, highly expressed in intestine and to a lesser extent in other tissues including muscles and neurons.

It carries out the reaction Thiol-dependent hydrolysis of ester, thioester, amide, peptide and isopeptide bonds formed by the C-terminal Gly of ubiquitin (a 76-residue protein attached to proteins as an intracellular targeting signal).. Ubiquitin-protein hydrolase involved both in the processing of ubiquitin precursors and of ubiquitinated proteins. This enzyme is a thiol protease that recognizes and hydrolyzes a peptide bond at the C-terminal glycine of ubiquitin. This is Ubiquitin carboxyl-terminal hydrolase ubh-4 from Caenorhabditis elegans.